Here is a 390-residue protein sequence, read N- to C-terminus: Succinate--CoA ligase [ADP-forming] subunit beta (390 aa).

The ATP-grasp domain maps to 9–245 (KHLLKKYNIP…TTQEDEHETM (237 aa)). Residues K46, 53 to 55 (GRG), E99, S102, and E107 contribute to the ATP site. Mg(2+) contacts are provided by N200 and D214. Substrate is bound by residues N265 and 322–324 (GIV).

The protein belongs to the succinate/malate CoA ligase beta subunit family. In terms of assembly, heterotetramer of two alpha and two beta subunits. Mg(2+) is required as a cofactor.

The catalysed reaction is succinate + ATP + CoA = succinyl-CoA + ADP + phosphate. The enzyme catalyses GTP + succinate + CoA = succinyl-CoA + GDP + phosphate. Its pathway is carbohydrate metabolism; tricarboxylic acid cycle; succinate from succinyl-CoA (ligase route): step 1/1. Succinyl-CoA synthetase functions in the citric acid cycle (TCA), coupling the hydrolysis of succinyl-CoA to the synthesis of either ATP or GTP and thus represents the only step of substrate-level phosphorylation in the TCA. The beta subunit provides nucleotide specificity of the enzyme and binds the substrate succinate, while the binding sites for coenzyme A and phosphate are found in the alpha subunit. The protein is Succinate--CoA ligase [ADP-forming] subunit beta of Coxiella burnetii (strain RSA 331 / Henzerling II).